The sequence spans 242 residues: Methylthioribulose-1-phosphate dehydratase (242 aa).

Residues 1–23 (MTDQREEPQGSNDHLVRSSDPEH) are disordered. C102 is a substrate binding site. 2 residues coordinate Zn(2+): H119 and H121. E148 serves as the catalytic Proton donor/acceptor. H204 contributes to the Zn(2+) binding site.

Belongs to the aldolase class II family. MtnB subfamily. Requires Zn(2+) as cofactor.

Its subcellular location is the cytoplasm. The enzyme catalyses 5-(methylsulfanyl)-D-ribulose 1-phosphate = 5-methylsulfanyl-2,3-dioxopentyl phosphate + H2O. Its pathway is amino-acid biosynthesis; L-methionine biosynthesis via salvage pathway; L-methionine from S-methyl-5-thio-alpha-D-ribose 1-phosphate: step 2/6. Catalyzes the dehydration of methylthioribulose-1-phosphate (MTRu-1-P) into 2,3-diketo-5-methylthiopentyl-1-phosphate (DK-MTP-1-P). The polypeptide is Methylthioribulose-1-phosphate dehydratase (Uncinocarpus reesii (strain UAMH 1704)).